We begin with the raw amino-acid sequence, 115 residues long: Toxin-like structure LSTX-D1 (115 aa).

Residues 1–22 (MKVLVLFSVLFLTLFSYSSTEA) form the signal peptide. Residues 23 to 44 (IDEFDSDAEEDMLSLMANEQVR) constitute a propeptide that is removed on maturation. 4 disulfides stabilise this stretch: cysteine 48–cysteine 63, cysteine 55–cysteine 72, cysteine 62–cysteine 87, and cysteine 74–cysteine 85.

Belongs to the neurotoxin 19 (CSTX) family. 01 subfamily. In terms of tissue distribution, expressed by the venom gland.

The protein localises to the secreted. This chain is Toxin-like structure LSTX-D1, found in Lycosa singoriensis (Wolf spider).